Reading from the N-terminus, the 342-residue chain is NAD kinase (342 aa).

The active-site Proton acceptor is D66. NAD(+) contacts are provided by residues 66-67, R71, 141-142, K152, D171, 182-187, and A206; these read DG, ND, and TAYAFS.

The protein belongs to the NAD kinase family. Requires a divalent metal cation as cofactor.

The protein localises to the cytoplasm. The catalysed reaction is NAD(+) + ATP = ADP + NADP(+) + H(+). Functionally, involved in the regulation of the intracellular balance of NAD and NADP, and is a key enzyme in the biosynthesis of NADP. Catalyzes specifically the phosphorylation on 2'-hydroxyl of the adenosine moiety of NAD to yield NADP. This Bifidobacterium longum (strain NCC 2705) protein is NAD kinase.